A 353-amino-acid polypeptide reads, in one-letter code: Melatonin receptor type 1A (353 aa).

Over 1–32 (MKGNVSELLNATQQAPGGGEGGRPRPSWLAST) the chain is Extracellular. 2 N-linked (GlcNAc...) asparagine glycosylation sites follow: N4 and N10. A helical membrane pass occupies residues 33–53 (LAFILIFTIVVDILGNLLVIL). Residues 54 to 66 (SVYRNKKLRNSGN) lie on the Cytoplasmic side of the membrane. Residues 67-87 (IFVVSLAVADLVVAVYPYPLV) traverse the membrane as a helical segment. Topologically, residues 88–105 (LTSILNNGWNLGYLHCQV) are extracellular. C103 and C180 are joined by a disulfide. The chain crosses the membrane as a helical span at residues 106 to 126 (SAFLMGLSVIGSIFNITGIAM). Residues 127–145 (NRYCYICHSLKYDKIYSNK) are Cytoplasmic-facing. Residues 146-166 (NSLCYVFLIWMLTLIAIMPNL) traverse the membrane as a helical segment. Topologically, residues 167–190 (QTGTLQYDPRIYSCTFTQSVSSAY) are extracellular. The chain crosses the membrane as a helical span at residues 191 to 211 (TIAVVVFHFIVPMIIVIFCYL). The Cytoplasmic portion of the chain corresponds to 212 to 243 (RIWVLVLQVRRRVKPDNKPKLKPQDFRNFVTM). The helical transmembrane segment at 244–264 (FVVFVLFAICWAPLNLIGLIV) threads the bilayer. Topologically, residues 265-277 (ASDPATMVPRIPE) are extracellular. Residues 278–298 (WLFVASYYLAYFNSCLNAIIY) form a helical membrane-spanning segment. The Cytoplasmic portion of the chain corresponds to 299–353 (GLLNQNFRKEYKKIIVSLCTAKMFFVESSNEEADKIKCKPSPLIPNNNLIKVDSV).

This sequence belongs to the G-protein coupled receptor 1 family.

The protein resides in the cell membrane. Functionally, high affinity receptor for melatonin. Likely to mediate the reproductive and circadian actions of melatonin. The activity of this receptor is mediated by pertussis toxin sensitive G proteins that inhibit adenylate cyclase activity. Possibly involved in sleep induction, by melatonin activation of the potassium channel KCNMA1/BK and the dissociation of G-beta and G-gamma subunits, thereby decreasing synaptic transmission. This is Melatonin receptor type 1A (Mtnr1a) from Mus musculus (Mouse).